Consider the following 358-residue polypeptide: WD repeat-containing protein 53 (358 aa).

WD repeat units lie at residues Gly8–Gln47, Val92–Ser131, Arg134–Ile174, Leu195–Glu234, and Gly239–Gln278. The disordered stretch occupies residues Lys288–Asp309.

It belongs to the WD repeat WDR53 family.

This chain is WD repeat-containing protein 53 (Wdr53), found in Mus musculus (Mouse).